Consider the following 59-residue polypeptide: Large ribosomal subunit protein bL32 (59 aa).

The segment at 1–59 (MAVQQNRKTPSKRGMRRSHDALSGPALSVEPQTGETHRRHHVSPDGYYRGRKVMQGRED) is disordered. The span at 49-59 (RGRKVMQGRED) shows a compositional bias: basic residues.

This sequence belongs to the bacterial ribosomal protein bL32 family.

In Alkalilimnicola ehrlichii (strain ATCC BAA-1101 / DSM 17681 / MLHE-1), this protein is Large ribosomal subunit protein bL32.